The primary structure comprises 1357 residues: Mediator of RNA polymerase II transcription subunit 13 (1357 aa).

2 disordered regions span residues 356–391 and 420–487; these read SCNYGPASRTKLTPSKAQDLRRSAAPLSADSFGNGF and DLWN…HRKE. The span at 435-451 shows a compositional bias: polar residues; sequence INPTSQQGDSARITSGS.

It belongs to the Mediator complex subunit 13 family. As to quaternary structure, component of the SRB8-11 complex, which itself associates with the Mediator complex.

Its subcellular location is the nucleus. In terms of biological role, component of the SRB8-11 complex. The SRB8-11 complex is a regulatory module of the Mediator complex which is itself involved in regulation of basal and activated RNA polymerase II-dependent transcription. The SRB8-11 complex may be involved in the transcriptional repression of a subset of genes regulated by Mediator. It may inhibit the association of the Mediator complex with RNA polymerase II to form the holoenzyme complex. In Eremothecium gossypii (strain ATCC 10895 / CBS 109.51 / FGSC 9923 / NRRL Y-1056) (Yeast), this protein is Mediator of RNA polymerase II transcription subunit 13 (SSN2).